A 375-amino-acid polypeptide reads, in one-letter code: CC-adding tRNA nucleotidyltransferase (375 aa).

Position 27-30 (Gly27–Arg30) interacts with CTP. 2 residues coordinate Mg(2+): Asp40 and Asp42. CTP-binding positions include Arg95–Asp96, Asn100, Asp137–Arg146, and Arg177.

It belongs to the tRNA nucleotidyltransferase/poly(A) polymerase family. Requires Mg(2+) as cofactor.

It catalyses the reaction a tRNA precursor + 2 CTP = a tRNA with a 3' CC end + 2 diphosphate. TRNA nucleotidyltransferase involved in the synthesis of the tRNA CCA terminus. Adds the two cytidine residues to tRNA. In Halalkalibacterium halodurans (strain ATCC BAA-125 / DSM 18197 / FERM 7344 / JCM 9153 / C-125) (Bacillus halodurans), this protein is CC-adding tRNA nucleotidyltransferase.